We begin with the raw amino-acid sequence, 164 residues long: T-cell surface glycoprotein CD3 zeta chain (164 aa).

The N-terminal stretch at 1–21 (MKWKALFTAAILQAQLPITEA) is a signal peptide. Over 22-30 (QSFGLLDPK) the chain is Extracellular. Residues 31 to 51 (LCYLLDGILFIYGVILTALFL) traverse the membrane as a helical segment. At 52–164 (RVKFSRSADA…ALHMQALPPR (113 aa)) the chain is on the cytoplasmic side. Serine 58 carries the phosphoserine modification. ITAM domains lie at 61 to 89 (APAYQQGQNQLYNELNLGRREEYDVLDKR), 100 to 128 (PQRRKNPQEGLYNELQKDKMAEAYSEIGM), and 131 to 159 (ERRRGKGHDGLYQGLSTATKDTYDALHMQ). A phosphotyrosine mark is found at tyrosine 64, tyrosine 72, tyrosine 83, tyrosine 111, tyrosine 123, tyrosine 142, and tyrosine 153. The span at 83–96 (YDVLDKRRGRDPEM) shows a compositional bias: basic and acidic residues. The disordered stretch occupies residues 83–111 (YDVLDKRRGRDPEMGGKPQRRKNPQEGLY). The segment at 128 to 154 (MKGERRRGKGHDGLYQGLSTATKDTYD) is disordered.

The protein belongs to the CD3Z/FCER1G family. The TCR-CD3 complex is composed of a CD3D/CD3E and a CD3G/CD3E heterodimers that preferentially associate with TCRalpha and TCRbeta, respectively, to form TCRalpha/CD3E/CD3G and TCRbeta/CD3G/CD3E trimers. In turn, the hexamer interacts with CD3Z homodimer to form the TCR-CD3 complex. Alternatively, TCRalpha and TCRbeta can be replaced by TCRgamma and TCRdelta. Interacts with SLA. Interacts with TRAT1. Interacts with DOCK2. Interacts with SLA2. Interacts with SHB. Interacts with ZAP70. Interacts (tyrosine phosphorylated) with SHC1 (via SH2 domain). Interacts with PTPRC. Interacts with CRK; this interaction regulates CD3Z phosphorylation. Interacts (on T cell side) with CD81, ICAM1 and CD9 at immunological synapses between antigen-presenting cells and T cells. Interacts with CD160. Interacts with LY6E. The signaling subunit of immunoglobulin gamma (IgG) Fc receptor complex. As a homodimer or a heterodimer with FCER1G, associates with the ligand binding subunit FCGR3A (via transmembrane domain); this interaction is a prerequisite for Fc receptor complex expression on the cell surface. Interacts with CD5. As to quaternary structure, (Microbial infection) Interacts with HIV-1 Nef; this interaction up-regulates the expression of the Fas ligand (FASLG) at the cell surface. In terms of assembly, (Microbial infection) Interacts with HIV-2 Nef protein; this interaction induces down-regulation of cell surface TCR/CD3 complexes. Phosphorylated on Tyr residues after T-cell receptor triggering by LCK in association with CD4/CD8. CD3Z is expressed in normal lymphoid tissue and in peripheral blood mononuclear cells (PBMCs).

The protein resides in the cell membrane. Part of the TCR-CD3 complex present on T-lymphocyte cell surface that plays an essential role in adaptive immune response. When antigen presenting cells (APCs) activate T-cell receptor (TCR), TCR-mediated signals are transmitted across the cell membrane by the CD3 chains CD3D, CD3E, CD3G and CD3Z. All CD3 chains contain immunoreceptor tyrosine-based activation motifs (ITAMs) in their cytoplasmic domain. Upon TCR engagement, these motifs become phosphorylated by Src family protein tyrosine kinases LCK and FYN, resulting in the activation of downstream signaling pathways. CD3Z ITAMs phosphorylation creates multiple docking sites for the protein kinase ZAP70 leading to ZAP70 phosphorylation and its conversion into a catalytically active enzyme. Plays an important role in intrathymic T-cell differentiation. Additionally, participates in the activity-dependent synapse formation of retinal ganglion cells (RGCs) in both the retina and dorsal lateral geniculate nucleus (dLGN). The chain is T-cell surface glycoprotein CD3 zeta chain (CD247) from Homo sapiens (Human).